Here is a 219-residue protein sequence, read N- to C-terminus: Ribonuclease HII (219 aa).

One can recognise an RNase H type-2 domain in the interval 22–219 (GLVAGVDEVG…LLAMRMEAVV (198 aa)). 3 residues coordinate a divalent metal cation: aspartate 28, glutamate 29, and aspartate 125.

This sequence belongs to the RNase HII family. Mn(2+) serves as cofactor. It depends on Mg(2+) as a cofactor.

It localises to the cytoplasm. It carries out the reaction Endonucleolytic cleavage to 5'-phosphomonoester.. Endonuclease that specifically degrades the RNA of RNA-DNA hybrids. In Granulibacter bethesdensis (strain ATCC BAA-1260 / CGDNIH1), this protein is Ribonuclease HII.